A 368-amino-acid chain; its full sequence is tRNA-specific 2-thiouridylase MnmA (368 aa).

Residues 11 to 18 (GMSGGVDS) and Met-37 each bind ATP. The interval 97-99 (NPD) is interaction with target base in tRNA. The active-site Nucleophile is the Cys-102. Cysteines 102 and 199 form a disulfide. Gly-127 serves as a coordination point for ATP. The tract at residues 149–151 (KDQ) is interaction with tRNA. The Cysteine persulfide intermediate role is filled by Cys-199. Positions 311–312 (RY) are interaction with tRNA.

The protein belongs to the MnmA/TRMU family. In terms of assembly, interacts with TusE.

It localises to the cytoplasm. The catalysed reaction is S-sulfanyl-L-cysteinyl-[protein] + uridine(34) in tRNA + AH2 + ATP = 2-thiouridine(34) in tRNA + L-cysteinyl-[protein] + A + AMP + diphosphate + H(+). Functionally, catalyzes the 2-thiolation of uridine at the wobble position (U34) of tRNA(Lys), tRNA(Glu) and tRNA(Gln), leading to the formation of s(2)U34, the first step of tRNA-mnm(5)s(2)U34 synthesis. Sulfur is provided by IscS, via a sulfur-relay system. Binds ATP and its substrate tRNAs. The sequence is that of tRNA-specific 2-thiouridylase MnmA from Escherichia coli (strain SMS-3-5 / SECEC).